Consider the following 222-residue polypeptide: NADH dehydrogenase [ubiquinone] iron-sulfur protein 8-A, mitochondrial (222 aa).

4Fe-4S ferredoxin-type domains follow at residues 114–143 (RRYP…IEAE) and 153–182 (TRYD…EGPN). [4Fe-4S] cluster contacts are provided by cysteine 123, cysteine 126, cysteine 129, cysteine 133, cysteine 162, cysteine 165, cysteine 168, and cysteine 172.

Belongs to the complex I 23 kDa subunit family. As to quaternary structure, complex I is composed of at least 49 different subunits. This is a component of the iron-sulfur (IP) fragment of the enzyme. Requires [4Fe-4S] cluster as cofactor.

It is found in the mitochondrion. It carries out the reaction a ubiquinone + NADH + 5 H(+)(in) = a ubiquinol + NAD(+) + 4 H(+)(out). In terms of biological role, core subunit of the mitochondrial membrane respiratory chain NADH dehydrogenase (Complex I) that is believed to belong to the minimal assembly required for catalysis. Complex I functions in the transfer of electrons from NADH to the respiratory chain. The immediate electron acceptor for the enzyme is believed to be ubiquinone. May donate electrons to ubiquinone. The protein is NADH dehydrogenase [ubiquinone] iron-sulfur protein 8-A, mitochondrial of Arabidopsis thaliana (Mouse-ear cress).